A 147-amino-acid polypeptide reads, in one-letter code: UPF0306 protein YhbP (147 aa).

The protein belongs to the UPF0306 family.

In Escherichia coli O1:K1 / APEC, this protein is UPF0306 protein YhbP.